A 440-amino-acid polypeptide reads, in one-letter code: ATP-dependent protease ATPase subunit HslU (440 aa).

ATP-binding positions include Ile-18, 60-65 (GVGKTE), Asp-252, Glu-318, and Arg-390.

Belongs to the ClpX chaperone family. HslU subfamily. In terms of assembly, a double ring-shaped homohexamer of HslV is capped on each side by a ring-shaped HslU homohexamer. The assembly of the HslU/HslV complex is dependent on binding of ATP.

The protein localises to the cytoplasm. Its function is as follows. ATPase subunit of a proteasome-like degradation complex; this subunit has chaperone activity. The binding of ATP and its subsequent hydrolysis by HslU are essential for unfolding of protein substrates subsequently hydrolyzed by HslV. HslU recognizes the N-terminal part of its protein substrates and unfolds these before they are guided to HslV for hydrolysis. The protein is ATP-dependent protease ATPase subunit HslU of Acidithiobacillus ferrooxidans (strain ATCC 23270 / DSM 14882 / CIP 104768 / NCIMB 8455) (Ferrobacillus ferrooxidans (strain ATCC 23270)).